A 557-amino-acid polypeptide reads, in one-letter code: Tryptophan 2-monooxygenase (557 aa).

5 residues coordinate FMN: Ser49, Glu69, Arg71, Arg77, and Arg98. Arg98 provides a ligand contact to substrate.

This sequence belongs to the tryptophan 2-monooxygenase family. Monomer. FMN serves as cofactor.

The catalysed reaction is L-tryptophan + O2 = indole-3-acetamide + CO2 + H2O. It participates in plant hormone metabolism; auxin biosynthesis. In Pseudomonas savastanoi (Pseudomonas syringae pv. savastanoi), this protein is Tryptophan 2-monooxygenase (iaaM).